We begin with the raw amino-acid sequence, 193 residues long: Epididymal-specific lipocalin-12 (193 aa).

Residues 1–19 (MGPWWALWLILTLPQILGG) form the signal peptide. Cys88 and Cys193 are disulfide-bonded. N-linked (GlcNAc...) asparagine glycans are attached at residues Asn143 and Asn172.

Belongs to the calycin superfamily. Lipocalin family. In terms of assembly, monomer.

It is found in the secreted. Its function is as follows. Binds all-trans retinoic acid and may act as a retinoid carrier protein within the epididymis. May play a role in male fertility. The chain is Epididymal-specific lipocalin-12 (Lcn12) from Rattus norvegicus (Rat).